A 2778-amino-acid polypeptide reads, in one-letter code: Probable ubiquitin carboxyl-terminal hydrolase FAF (2778 aa).

Residues 1-85 are disordered; that stretch reads MTFDTRRHTT…SQSSDDVAAS (85 aa). The segment covering 10–39 has biased composition (low complexity); that stretch reads TGQPGSTAPSSSSSTTSTTTTTTSPAQSAG. Over residues 71 to 85 the composition is skewed to polar residues; that stretch reads QPATDSQSSDDVAAS. S924 bears the Phosphoserine mark. The tract at residues 1065–1094 is disordered; it reads GTGLASSPDSSSDSSTGSPPRPCPDMQRVE. A compositionally biased stretch (low complexity) spans 1070-1082; the sequence is SSPDSSSDSSTGS. Positions 1668–2062 constitute a USP domain; sequence CGLKNAGATC…NAYMLFYTRC (395 aa). C1677 serves as the catalytic Nucleophile. The active-site Proton acceptor is H1986. Disordered stretches follow at residues 2568 to 2632 and 2644 to 2691; these read VSEK…GDSN and AYTS…INGL. Composition is skewed to low complexity over residues 2614–2627 and 2644–2671; these read TPTTSSPSTAAWPA and AYTSTGSGSTSGGSAPTSALTTTAGSGA. Over residues 2672–2691 the composition is skewed to polar residues; that stretch reads NSETESSAQETTGETTINGL.

Belongs to the peptidase C19 family. Interacts with imd. In terms of processing, ubiquitinated. Ubiquitination is enhanced by the expression of imd. In terms of tissue distribution, eye disks and ovaries. Expressed in larval fat body.

The catalysed reaction is Thiol-dependent hydrolysis of ester, thioester, amide, peptide and isopeptide bonds formed by the C-terminal Gly of ubiquitin (a 76-residue protein attached to proteins as an intracellular targeting signal).. In terms of biological role, ubiquitin C-terminal hydrolase involved in development and the imd/NF-kappa-B (IMD) signaling cascade. Required for eye and embryo development, and plays a role in compound eye assembly and oogenesis respectively. In the larval eye disks, cells outside the assembling facets require this protein for short-range cell interactions that prevent the mystery cells from becoming photoreceptors. Also required for nuclear migration and cellularization in early embryogenesis and could play a role in pole cell determination, development or function. Regulates the IMD signaling cascade at later stages of infection (around 6 hours post-infection) by inhibiting the expression of the antimicrobial peptides Dpt and Dro. Acts by modulating the state of imd polyubiquitination and/or stability; a function which appears to be independent of its enzymatic activity. In turn, imd enhances the polyubiquitination and stability of faf suggesting that they may form a regulatory feedback mechanism within the Imd pathway. The protein is Probable ubiquitin carboxyl-terminal hydrolase FAF (faf) of Drosophila melanogaster (Fruit fly).